The sequence spans 150 residues: D-aminoacyl-tRNA deacylase (150 aa).

The Gly-cisPro motif, important for rejection of L-amino acids motif lies at 136 to 137; the sequence is GP.

This sequence belongs to the DTD family. Homodimer.

Its subcellular location is the cytoplasm. It catalyses the reaction glycyl-tRNA(Ala) + H2O = tRNA(Ala) + glycine + H(+). The catalysed reaction is a D-aminoacyl-tRNA + H2O = a tRNA + a D-alpha-amino acid + H(+). In terms of biological role, an aminoacyl-tRNA editing enzyme that deacylates mischarged D-aminoacyl-tRNAs. Also deacylates mischarged glycyl-tRNA(Ala), protecting cells against glycine mischarging by AlaRS. Acts via tRNA-based rather than protein-based catalysis; rejects L-amino acids rather than detecting D-amino acids in the active site. By recycling D-aminoacyl-tRNA to D-amino acids and free tRNA molecules, this enzyme counteracts the toxicity associated with the formation of D-aminoacyl-tRNA entities in vivo and helps enforce protein L-homochirality. The protein is D-aminoacyl-tRNA deacylase of Staphylococcus carnosus (strain TM300).